The chain runs to 357 residues: S-adenosylmethionine:tRNA ribosyltransferase-isomerase (357 aa).

Belongs to the QueA family. Monomer.

It is found in the cytoplasm. The enzyme catalyses 7-aminomethyl-7-carbaguanosine(34) in tRNA + S-adenosyl-L-methionine = epoxyqueuosine(34) in tRNA + adenine + L-methionine + 2 H(+). It functions in the pathway tRNA modification; tRNA-queuosine biosynthesis. Functionally, transfers and isomerizes the ribose moiety from AdoMet to the 7-aminomethyl group of 7-deazaguanine (preQ1-tRNA) to give epoxyqueuosine (oQ-tRNA). The chain is S-adenosylmethionine:tRNA ribosyltransferase-isomerase from Buchnera aphidicola subsp. Acyrthosiphon pisum (strain Tuc7).